The chain runs to 326 residues: Pectate lyase plyB (326 aa).

A signal peptide spans 1–15 (MRFTPLFLLAAVAIA). Positions 133, 162, and 166 each coordinate Ca(2+). Residue R219 is part of the active site.

It belongs to the polysaccharide lyase 1 family. Ca(2+) is required as a cofactor.

The protein localises to the secreted. The enzyme catalyses Eliminative cleavage of (1-&gt;4)-alpha-D-galacturonan to give oligosaccharides with 4-deoxy-alpha-D-galact-4-enuronosyl groups at their non-reducing ends.. The protein operates within glycan metabolism; pectin degradation; 2-dehydro-3-deoxy-D-gluconate from pectin: step 2/5. Functionally, pectinolytic enzyme consist of four classes of enzymes: pectin lyase, polygalacturonase, pectin methylesterase and rhamnogalacturonase. Among pectinolytic enzymes, pectin lyase is the most important in depolymerization of pectin, since it cleaves internal glycosidic bonds of highly methylated pectins. This Emericella nidulans (strain FGSC A4 / ATCC 38163 / CBS 112.46 / NRRL 194 / M139) (Aspergillus nidulans) protein is Pectate lyase plyB (plyB).